The sequence spans 316 residues: Carbamate kinase-like protein YahI (316 aa).

Belongs to the carbamate kinase family.

The polypeptide is Carbamate kinase-like protein YahI (yahI) (Escherichia coli (strain K12)).